We begin with the raw amino-acid sequence, 848 residues long: Neurofilament medium polypeptide (848 aa).

Polar residues predominate over residues 1 to 10 (MSYTLDSLGN). The segment at 1–51 (MSYTLDSLGNPSAYRRVTETRSSFSRVSGSPSSGFRSQSWSRGSPSTVSSS) is disordered. Ser2 bears the N-acetylserine mark. Residues 2-102 (SYTLDSLGNP…KLSRSNEKEQ (101 aa)) are head. The segment covering 21-44 (RSSFSRVSGSPSSGFRSQSWSRGS) has biased composition (low complexity). Phosphoserine is present on Ser30. Position 42 is an omega-N-methylarginine (Arg42). Thr47 is a glycosylation site (O-linked (GlcNAc) threonine). Position 97 is a phosphoserine (Ser97). In terms of domain architecture, IF rod spans 99-410 (EKEQLQGLND…KLLEGEETRF (312 aa)). The segment at 103–134 (LQGLNDRFAGYIEKVHYLEQQNKEIEAEIQAL) is coil 1A. Residues 135-147 (RQKQASHAQLGDA) are linker 1. Residues 148-246 (YDQEIRELRA…EEEVADLLAQ (99 aa)) are coil 1B. At Ser224 the chain carries Phosphoserine. Residues 247–263 (IQASHITVERKDYLKTD) are linker 12. Residues 264–285 (ISTALKEIRSQLECHSDQNMHQ) are coil 2A. The segment at 286 to 289 (AEEW) is linker 2. The interval 290–410 (FKCRYAKLTE…KLLEGEETRF (121 aa)) is coil 2B. Tyr318 is modified (phosphotyrosine). Phosphoserine occurs at positions 344, 416, and 428. Residues 411-848 (STFSGSITGP…AIVKEVTQGD (438 aa)) are tail. The O-linked (GlcNAc) threonine glycan is linked to Thr430. Ser466 and Ser482 each carry phosphoserine. The interval 482 to 785 (SAKEEKEEAE…GEDSSDDKVV (304 aa)) is disordered. The segment covering 488-498 (EEAEEKEEEPE) has biased composition (acidic residues). Residues 499–509 (AEKSPVKSPEA) are compositionally biased toward basic and acidic residues. 2 positions are modified to phosphoserine: Ser502 and Ser506. Residues 510 to 533 (KEEEEEGEKEEEEEGQEEEEEEDE) show a composition bias toward acidic residues. The span at 534–553 (GVKSDQAEEGGSEKEGSSEK) shows a compositional bias: basic and acidic residues. 4 positions are modified to phosphoserine: Ser537, Ser545, Ser550, and Ser551. A compositionally biased stretch (acidic residues) spans 554-576 (DEGEQEEEEGETEAEGEGEEAEA). Thr565 is subject to Phosphothreonine. Residues 577-604 (KEEKKIEGKVEEVAVKEEIKVEKPEKAK) show a composition bias toward basic and acidic residues. Phosphoserine occurs at positions 605 and 610. Basic and acidic residues-rich tracts occupy residues 611–677 (PVEE…KAVE) and 689–711 (SLEK…KAEE). Residue Thr642 is modified to Phosphothreonine. A phosphoserine mark is found at Ser645, Ser669, Ser689, Ser715, Ser723, Ser753, and Ser769. Composition is skewed to basic and acidic residues over residues 720–732 (SDRS…KEDI) and 748–760 (TQEK…EEKG). The segment covering 771-785 (AEEKKGEDSSDDKVV) has biased composition (basic and acidic residues).

This sequence belongs to the intermediate filament family. In terms of assembly, forms heterodimers with NEFL; which can further hetero-oligomerize (in vitro). Forms heterodimers with INA (in vitro). There are a number of repeats of the tripeptide K-S-P, NFM is phosphorylated on a number of the serines in this motif. It is thought that phosphorylation of NFM results in the formation of interfilament cross bridges that are important in the maintenance of axonal caliber. Post-translationally, phosphorylation seems to play a major role in the functioning of the larger neurofilament polypeptides (NF-M and NF-H), the levels of phosphorylation being altered developmentally and coincidentally with a change in the neurofilament function. In terms of processing, phosphorylated in the head and rod regions by the PKC kinase PKN1, leading to the inhibition of polymerization. As to expression, expressed in the sciatic nerve (at protein level).

Its subcellular location is the cytoplasm. The protein localises to the cytoskeleton. It is found in the cell projection. The protein resides in the axon. Neurofilaments usually contain three intermediate filament proteins: NEFL, NEFM, and NEFH which are involved in the maintenance of neuronal caliber. May additionally cooperate with the neuronal intermediate filament proteins PRPH and INA to form neuronal filamentous networks. This chain is Neurofilament medium polypeptide (Nefm), found in Mus musculus (Mouse).